The primary structure comprises 417 residues: Tyrosine--tRNA ligase (417 aa).

L-tyrosine is bound at residue Tyr35. Positions 40–49 match the 'HIGH' region motif; it reads ATAGSLTVGH. 2 residues coordinate L-tyrosine: Tyr165 and Gln169. A 'KMSKS' region motif is present at residues 229–233; it reads KFGKS. Lys232 is a binding site for ATP. The 67-residue stretch at 350-416 folds into the S4 RNA-binding domain; that stretch reads ISLLEALVFT…GKRFNALIIF (67 aa).

Belongs to the class-I aminoacyl-tRNA synthetase family. TyrS type 1 subfamily. Homodimer.

It localises to the cytoplasm. It carries out the reaction tRNA(Tyr) + L-tyrosine + ATP = L-tyrosyl-tRNA(Tyr) + AMP + diphosphate + H(+). Functionally, catalyzes the attachment of tyrosine to tRNA(Tyr) in a two-step reaction: tyrosine is first activated by ATP to form Tyr-AMP and then transferred to the acceptor end of tRNA(Tyr). This chain is Tyrosine--tRNA ligase, found in Phytoplasma mali (strain AT).